We begin with the raw amino-acid sequence, 516 residues long: Endoglucanase 17 (516 aa).

The N-terminal stretch at 1–29 (MALLLVSSSSSYALRVTIFLSFFFFLCNG) is a signal peptide. Aspartate 105 serves as the catalytic Nucleophile. Catalysis depends on residues histidine 433, aspartate 484, and glutamate 493.

Belongs to the glycosyl hydrolase 9 (cellulase E) family.

It is found in the secreted. It catalyses the reaction Endohydrolysis of (1-&gt;4)-beta-D-glucosidic linkages in cellulose, lichenin and cereal beta-D-glucans.. This Arabidopsis thaliana (Mouse-ear cress) protein is Endoglucanase 17.